The sequence spans 518 residues: Putative transposase for insertion sequence IS408 (518 aa).

The HTH IS408-type domain occupies 11 to 94; sequence LKEVLRLKWA…PDYTALHREL (84 aa). The segment at residues 23 to 44 is a DNA-binding region (H-T-H motif); sequence LTHRQISRAIGISVGAVSKFAA. The region spanning 140–335 is the Integrase catalytic domain; that stretch reads QQHRAGEKLF…LPVRRYEIAT (196 aa). The interval 496–518 is disordered; sequence LPTTPAEWRSPEHENVRGPDYYH. The span at 504–518 shows a compositional bias: basic and acidic residues; that stretch reads RSPEHENVRGPDYYH.

The protein belongs to the transposase IS21/IS408/IS1162 family.

In terms of biological role, required for the transposition of the insertion element. This is Putative transposase for insertion sequence IS408 from Burkholderia multivorans (strain ATCC 17616 / 249).